The sequence spans 301 residues: E3 ubiquitin-protein ligase RNF144B (301 aa).

A TRIAD supradomain region spans residues 26–242; it reads PLVTCKLCLC…YDKGPCRNKL (217 aa). Zn(2+)-binding residues include Cys30, Cys33, Cys53, Cys56, Cys121, Cys126, Cys145, Cys148, Cys153, Cys156, His161, Cys166, Cys191, and Cys194. Residues 30–80 form an RING-type 1 zinc finger; that stretch reads CKLCLCEQSLDKMTMLQECQCIFCTPCLKQYMVLSIREGCGSPITCPDMVC. The segment at 101–166 adopts an IBR-type zinc-finger fold; it reads QLYQRLKFER…KDAWHEESSC (66 aa). The RING-type 2; atypical zinc-finger motif lies at 191–220; that stretch reads CPVCRIYIERNEGCAQMMCKNCKHTFCWYC. The active site involves Cys204. Zn(2+)-binding residues include Cys209, Cys212, Cys217, Cys220, His232, and Cys238. A helical transmembrane segment spans residues 256–276; sequence VVGILVGLGVIALVTSPLLLL.

Belongs to the RBR family. RNF144 subfamily. In terms of assembly, interacts with UBE2L3, UBE2L6 and LCMT2, as well as with BAX. Interacts with TBK1; this interaction inhibits TBK1 phosphorylation and 'Lys-63'-linked polyubiquitination. Auto-ubiquitinated.

It is found in the mitochondrion membrane. The protein localises to the cytoplasm. It carries out the reaction [E2 ubiquitin-conjugating enzyme]-S-ubiquitinyl-L-cysteine + [acceptor protein]-L-lysine = [E2 ubiquitin-conjugating enzyme]-L-cysteine + [acceptor protein]-N(6)-ubiquitinyl-L-lysine.. Its pathway is protein modification; protein ubiquitination. In terms of biological role, E3 ubiquitin-protein ligase which accepts ubiquitin from E2 ubiquitin-conjugating enzymes UBE2L3 and UBE2L6 in the form of a thioester and then directly transfers the ubiquitin to targeted substrates such as LCMT2, thereby promoting their degradation. Induces apoptosis via a p53/TP53-dependent but caspase-independent mechanism. Plays a crucial role in maintaining the genomic stability by controlling the degradation of multiple proteins involved in mitotic progression and DNA damage. Regulates epithelial homeostasis by mediating degradation of CDKN1A and isoform 2 of TP63. Plays a regulatory role in innate immunity by negatively regulating IRF3 activation and IFN-beta production. Mechanistically, inhibits TBK1 phosphorylation and 'Lys-63'-linked polyubiquitination independently of its E3 ligase activity. Alternatively, promotes 'Lys-27' and 'Lys-33'-linked ubiquitination of IFIH1/MDA5, promoting selective autophagic degradation of IFIH1/MDA5 to inhibit antiviral response. The polypeptide is E3 ubiquitin-protein ligase RNF144B (Rnf144b) (Mus musculus (Mouse)).